Consider the following 272-residue polypeptide: Sordarin/hypoxysordarin biosynthesis cluster protein P (272 aa).

N-linked (GlcNAc...) asparagine glycosylation is found at N6 and N23. Transmembrane regions (helical) follow at residues 31-51 (FLASIWPYRHMMWIGPMLLFL) and 67-87 (AYHMPYSILALHVFISFVDLA). N208 is a glycosylation site (N-linked (GlcNAc...) asparagine).

Its subcellular location is the membrane. Its pathway is antibiotic biosynthesis. Its function is as follows. Part of the gene cluster that mediates the biosynthesis of sordarin and hypoxysordarin, glycoside antibiotics with a unique tetracyclic diterpene aglycone structure. First, the geranylgeranyl diphosphate synthase sdnC constructs GGDP from farnesyl diphosphate and isopentenyl diphosphate. The diterpene cyclase sdnA then catalyzes the cyclization of GGDP to afford cycloaraneosene. Cycloaraneosene is then hydroxylated four times by the putative cytochrome P450 monooxygenases sdnB, sdnE, sdnF and sdnH to give a hydroxylated cycloaraneosene derivative such as cycloaraneosene-8,9,13,19-tetraol. Although the order of the hydroxylations is unclear, at least C8, C9 and C13 of the cycloaraneosene skeleton are hydroxylated before the sordaricin formation. Dehydration of the 13-hydroxy group of the hydroxylated cycloaraneosene derivative might be catalyzed by an unassigned hypothetical protein such as sdnG and sdnP to construct the cyclopentadiene moiety. The FAD-dependent oxidoreductase sdnN is proposed to catalyze the oxidation at C9 of the hydroxylated cycloaraneosene derivative and also catalyze the Baeyer-Villiger oxidation to give the lactone intermediate. The presumed lactone intermediate would be hydrolyzed to give an acrolein moiety and a carboxylate moiety. Then, [4+2]cycloaddition would occur between the acrolein moiety and the cyclopentadiene moiety to give sordaricin. SdnN might also be involved in the [4+2]cycloaddition after the hypothesized oxidation to accommodate the oxidized product and prompt the [4+2]cycloaddition. GDP-6-deoxy-D-altrose may be biosynthesized from GDP-D-mannose by the putative GDP-mannose-4,6-dehydratase sdnI and the short-chain dehydrogenase sdnK. The glycosyltransferase sdnJ catalyzes the attachment of 6-deoxy-D-altrose onto the 19-hydroxy group of sordaricin to give 4'-O-demethylsordarin. The methyltransferase sdnD would complete the biosynthesis of sordarin. Sordarin can be further modified into hypoxysordarin. The unique acyl chain at the 3'-hydroxy group of hypoxysordarin would be constructed by an iterative type I PKS sdnO and the trans-acting polyketide methyltransferase sdnL. SdnL would be responsible for the introduction of an alpha-methyl group of the polyketide chain. Alternatively, the beta-lactamase-like protein sdnR might be responsible for the cleavage and transfer of the polyketide chain from the PKS sdnO to sordarin. Two putative cytochrome P450 monooxygenases, sdnQ and sdnT, might catalyze the epoxidations of the polyketide chain to complete the biosynthesis of hypoxysordarin. Transcriptional regulators sdnM and sdnS are presumably encoded for the transcriptional regulation of the expression of the sdn gene cluster. The chain is Sordarin/hypoxysordarin biosynthesis cluster protein P from Sordaria araneosa (Pleurage araneosa).